The chain runs to 216 residues: N-(5'-phosphoribosyl)anthranilate isomerase (216 aa).

The protein belongs to the TrpF family.

The catalysed reaction is N-(5-phospho-beta-D-ribosyl)anthranilate = 1-(2-carboxyphenylamino)-1-deoxy-D-ribulose 5-phosphate. It participates in amino-acid biosynthesis; L-tryptophan biosynthesis; L-tryptophan from chorismate: step 3/5. In Methanopyrus kandleri (strain AV19 / DSM 6324 / JCM 9639 / NBRC 100938), this protein is N-(5'-phosphoribosyl)anthranilate isomerase.